The primary structure comprises 397 residues: Flavohemoprotein (397 aa).

The Globin domain maps to 4–140 (SFSPHTITLI…IANLLKDREA (137 aa)). H87 is a binding site for heme b. Catalysis depends on charge relay system residues Y97 and E139. Residues 151 to 397 (GGWIHWRRFV…FGPMDEEMAA (247 aa)) are reductase. The FAD-binding FR-type domain maps to 154 to 258 (IHWRRFVISK…TPPVGDFFLP (105 aa)). Residues Y192 and 207–210 (RNYS) each bind FAD. 271-276 (GVGLTP) is an NADP(+) binding site. 387-390 (FFGP) is a binding site for FAD.

The protein belongs to the globin family. Two-domain flavohemoproteins subfamily. This sequence in the C-terminal section; belongs to the flavoprotein pyridine nucleotide cytochrome reductase family. Heme b serves as cofactor. Requires FAD as cofactor.

The enzyme catalyses 2 nitric oxide + NADPH + 2 O2 = 2 nitrate + NADP(+) + H(+). It carries out the reaction 2 nitric oxide + NADH + 2 O2 = 2 nitrate + NAD(+) + H(+). Is involved in NO detoxification in an aerobic process, termed nitric oxide dioxygenase (NOD) reaction that utilizes O(2) and NAD(P)H to convert NO to nitrate, which protects the bacterium from various noxious nitrogen compounds. Therefore, plays a central role in the inducible response to nitrosative stress. The polypeptide is Flavohemoprotein (Xylella fastidiosa (strain 9a5c)).